Reading from the N-terminus, the 270-residue chain is HTH-type transcriptional repressor DrrR1 (270 aa).

Residues 1–11 (MESGTSRTSDT) are compositionally biased toward low complexity. A disordered region spans residues 1-28 (MESGTSRTSDTGGTGRAGSTETSGSGDI). The HTH tetR-type domain occupies 49–109 (TLTLDRVVEA…LMLDRVQRPS (61 aa)). Residues 72 to 91 (SMRRVAAELGTGTMSLYRYV) constitute a DNA-binding region (H-T-H motif).

The protein resides in the cytoplasm. Its activity is regulated as follows. Daunorubicin and doxorubicin can induce dissociation of DrrR1 from its DNA complex. Ampicillin cannot release DrrR1 from the DNA complex at the same concentrations. In terms of biological role, transcriptional regulator that modulates the expression of the drrA2-drrB2 genes, which encode an ABC transporter involved in daunorubicin efflux, in response to intracellular daunorubicin/doxorubicin accumulation. In the absence of daunorubicin or doxorubicin, binds directly to the drrA2-drrB2 promoter region and negatively regulates expression of the genes. In the presence of daunorubicin or doxorubicin, DrrR1 dissociates from DNA, leading to the transcription of the genes. The protein is HTH-type transcriptional repressor DrrR1 of Streptomyces coeruleorubidus.